The following is an 818-amino-acid chain: Serine/threonine-protein kinase PTK2/STK2 (818 aa).

Residues 28–39 are compositionally biased toward polar residues; the sequence is NSSSHTDNSSLL. 2 disordered regions span residues 28–100 and 117–177; these read NSSS…GSVS and NPYL…SHHF. T56 is modified (phosphothreonine). Positions 57–81 are enriched in low complexity; the sequence is SPSISGSGSGGNSPSSSAGARQRSA. 2 positions are modified to phosphoserine: S59 and S80. Basic and acidic residues predominate over residues 136 to 160; sequence TRDRDRAVLDREKEKERARNKERNT. One can recognise a Protein kinase domain in the interval 255–562; the sequence is DTDNKPIGSG…MDDLFNDPFF (308 aa). ATP contacts are provided by residues 261 to 269 and K285; that span reads IGSGGSSEV. D388 serves as the catalytic Proton acceptor. The span at 585–595 shows a compositional bias: polar residues; sequence STSTNDFSENS. Residues 585-795 are disordered; that stretch reads STSTNDFSEN…SVSSSKKKKV (211 aa). S623 and S632 each carry phosphoserine. 2 stretches are compositionally biased toward basic and acidic residues: residues 638–651 and 659–685; these read KVKD…HDVG and TKPK…KVIE. S694 carries the phosphoserine modification. T700 carries the phosphothreonine modification. Residue S711 is modified to Phosphoserine. The segment covering 727-736 has biased composition (low complexity); that stretch reads TPTTPTHNGP. T737 bears the Phosphothreonine mark. S752, S755, S778, and S781 each carry phosphoserine. The segment covering 755-767 has biased composition (polar residues); sequence SLKSETPASTKNF. Over residues 768–789 the composition is skewed to low complexity; it reads SAPNVSSSSNSLRSLGSPSVSS.

This sequence belongs to the protein kinase superfamily. Ser/Thr protein kinase family.

It is found in the nucleus. The protein resides in the cytoplasm. It carries out the reaction L-seryl-[protein] + ATP = O-phospho-L-seryl-[protein] + ADP + H(+). The catalysed reaction is L-threonyl-[protein] + ATP = O-phospho-L-threonyl-[protein] + ADP + H(+). Functionally, essential determinant for high-affinity spermidine transport. Required for the activation of the plasma membrane proton pump PMA1 via phosphorylation of 'Ser-899'. The sequence is that of Serine/threonine-protein kinase PTK2/STK2 (PTK2) from Saccharomyces cerevisiae (strain ATCC 204508 / S288c) (Baker's yeast).